We begin with the raw amino-acid sequence, 200 residues long: Pyridoxal 5'-phosphate synthase subunit PdxT (200 aa).

Position 46 to 48 (46 to 48 (GES)) interacts with L-glutamine. C78 (nucleophile) is an active-site residue. Residues R107 and 138-139 (IR) contribute to the L-glutamine site. Catalysis depends on charge relay system residues H175 and E177.

This sequence belongs to the glutaminase PdxT/SNO family. In the presence of PdxS, forms a dodecamer of heterodimers. Only shows activity in the heterodimer.

The enzyme catalyses aldehydo-D-ribose 5-phosphate + D-glyceraldehyde 3-phosphate + L-glutamine = pyridoxal 5'-phosphate + L-glutamate + phosphate + 3 H2O + H(+). It catalyses the reaction L-glutamine + H2O = L-glutamate + NH4(+). Its pathway is cofactor biosynthesis; pyridoxal 5'-phosphate biosynthesis. Functionally, catalyzes the hydrolysis of glutamine to glutamate and ammonia as part of the biosynthesis of pyridoxal 5'-phosphate. The resulting ammonia molecule is channeled to the active site of PdxS. This chain is Pyridoxal 5'-phosphate synthase subunit PdxT, found in Corynebacterium glutamicum (strain ATCC 13032 / DSM 20300 / JCM 1318 / BCRC 11384 / CCUG 27702 / LMG 3730 / NBRC 12168 / NCIMB 10025 / NRRL B-2784 / 534).